Here is a 215-residue protein sequence, read N- to C-terminus: Adenylate kinase (215 aa).

10-15 is an ATP binding site; that stretch reads GAGKGT. The tract at residues 30-59 is NMP; sequence STGDMFRLAIKEGTELGKKAKEFMDQGDLV. AMP contacts are provided by residues threonine 31, arginine 36, 57–59, 85–88, and glutamine 92; these read DLV and GFPR. Residues 126–163 form an LID region; that stretch reads GRRICPTCGTAYHVVYNPPKEEGICDKDGSQLIQRDDD. Arginine 127 is a binding site for ATP. The Zn(2+) site is built by cysteine 130, cysteine 133, cysteine 150, and aspartate 153. The AMP site is built by arginine 160 and arginine 171. Arginine 199 is a binding site for ATP.

The protein belongs to the adenylate kinase family. In terms of assembly, monomer.

The protein resides in the cytoplasm. The catalysed reaction is AMP + ATP = 2 ADP. It functions in the pathway purine metabolism; AMP biosynthesis via salvage pathway; AMP from ADP: step 1/1. Functionally, catalyzes the reversible transfer of the terminal phosphate group between ATP and AMP. Plays an important role in cellular energy homeostasis and in adenine nucleotide metabolism. This is Adenylate kinase from Oceanobacillus iheyensis (strain DSM 14371 / CIP 107618 / JCM 11309 / KCTC 3954 / HTE831).